Here is a 171-residue protein sequence, read N- to C-terminus: Ribosome maturation factor RimP (171 aa).

The protein belongs to the RimP family.

Its subcellular location is the cytoplasm. Required for maturation of 30S ribosomal subunits. The chain is Ribosome maturation factor RimP from Anaeromyxobacter sp. (strain Fw109-5).